A 491-amino-acid polypeptide reads, in one-letter code: Probable glycine dehydrogenase (decarboxylating) subunit 2 (491 aa).

At K273 the chain carries N6-(pyridoxal phosphate)lysine.

Belongs to the GcvP family. C-terminal subunit subfamily. In terms of assembly, the glycine cleavage system is composed of four proteins: P, T, L and H. In this organism, the P 'protein' is a heterodimer of two subunits. It depends on pyridoxal 5'-phosphate as a cofactor.

It carries out the reaction N(6)-[(R)-lipoyl]-L-lysyl-[glycine-cleavage complex H protein] + glycine + H(+) = N(6)-[(R)-S(8)-aminomethyldihydrolipoyl]-L-lysyl-[glycine-cleavage complex H protein] + CO2. Functionally, the glycine cleavage system catalyzes the degradation of glycine. The P protein binds the alpha-amino group of glycine through its pyridoxal phosphate cofactor; CO(2) is released and the remaining methylamine moiety is then transferred to the lipoamide cofactor of the H protein. The protein is Probable glycine dehydrogenase (decarboxylating) subunit 2 of Bacillus anthracis (strain A0248).